A 189-amino-acid polypeptide reads, in one-letter code: Nucleoside triphosphate pyrophosphatase (189 aa).

The active-site Proton acceptor is D70.

This sequence belongs to the Maf family. A divalent metal cation is required as a cofactor.

It localises to the cytoplasm. The enzyme catalyses a ribonucleoside 5'-triphosphate + H2O = a ribonucleoside 5'-phosphate + diphosphate + H(+). It carries out the reaction a 2'-deoxyribonucleoside 5'-triphosphate + H2O = a 2'-deoxyribonucleoside 5'-phosphate + diphosphate + H(+). Nucleoside triphosphate pyrophosphatase. May have a dual role in cell division arrest and in preventing the incorporation of modified nucleotides into cellular nucleic acids. The chain is Nucleoside triphosphate pyrophosphatase from Xylella fastidiosa (strain M23).